Reading from the N-terminus, the 464-residue chain is tRNA modification GTPase MnmE (464 aa).

(6S)-5-formyl-5,6,7,8-tetrahydrofolate is bound by residues Arg25, Glu87, and Lys130. Residues 226 to 386 (GLSVVLAGQP…LREELLRIAG (161 aa)) form the TrmE-type G domain. Asn236 lines the K(+) pocket. GTP contacts are provided by residues 236–241 (NVGKSS), 255–261 (TPIAGTT), and 280–283 (DTAG). Mg(2+) is bound at residue Ser240. Residues Thr255, Ile257, and Thr260 each coordinate K(+). A Mg(2+)-binding site is contributed by Thr261. Lys464 provides a ligand contact to (6S)-5-formyl-5,6,7,8-tetrahydrofolate.

The protein belongs to the TRAFAC class TrmE-Era-EngA-EngB-Septin-like GTPase superfamily. TrmE GTPase family. In terms of assembly, homodimer. Heterotetramer of two MnmE and two MnmG subunits. K(+) serves as cofactor.

The protein localises to the cytoplasm. In terms of biological role, exhibits a very high intrinsic GTPase hydrolysis rate. Involved in the addition of a carboxymethylaminomethyl (cmnm) group at the wobble position (U34) of certain tRNAs, forming tRNA-cmnm(5)s(2)U34. This Paraburkholderia xenovorans (strain LB400) protein is tRNA modification GTPase MnmE.